Reading from the N-terminus, the 454-residue chain is Bifunctional protein GlmU (454 aa).

Residues 1 to 226 (MSLNVVILAA…AIEVEGANNR (226 aa)) are pyrophosphorylase. Residues 8 to 11 (LAAG), K22, Q73, 78 to 79 (GT), 100 to 102 (YGD), G137, E151, N166, and N224 contribute to the UDP-N-acetyl-alpha-D-glucosamine site. A Mg(2+)-binding site is contributed by D102. N224 lines the Mg(2+) pocket. The interval 227–247 (VQLAQLERAYQARAAEKMMLE) is linker. The tract at residues 248 to 454 (GANLRDPARI…GWQRPIKIKK (207 aa)) is N-acetyltransferase. UDP-N-acetyl-alpha-D-glucosamine-binding residues include R330 and K348. H360 (proton acceptor) is an active-site residue. UDP-N-acetyl-alpha-D-glucosamine is bound by residues Y363 and N374. Residues A377, 383–384 (NY), S402, A420, and R437 each bind acetyl-CoA.

The protein in the N-terminal section; belongs to the N-acetylglucosamine-1-phosphate uridyltransferase family. It in the C-terminal section; belongs to the transferase hexapeptide repeat family. Homotrimer. It depends on Mg(2+) as a cofactor.

It localises to the cytoplasm. It catalyses the reaction alpha-D-glucosamine 1-phosphate + acetyl-CoA = N-acetyl-alpha-D-glucosamine 1-phosphate + CoA + H(+). The catalysed reaction is N-acetyl-alpha-D-glucosamine 1-phosphate + UTP + H(+) = UDP-N-acetyl-alpha-D-glucosamine + diphosphate. It functions in the pathway nucleotide-sugar biosynthesis; UDP-N-acetyl-alpha-D-glucosamine biosynthesis; N-acetyl-alpha-D-glucosamine 1-phosphate from alpha-D-glucosamine 6-phosphate (route II): step 2/2. Its pathway is nucleotide-sugar biosynthesis; UDP-N-acetyl-alpha-D-glucosamine biosynthesis; UDP-N-acetyl-alpha-D-glucosamine from N-acetyl-alpha-D-glucosamine 1-phosphate: step 1/1. The protein operates within bacterial outer membrane biogenesis; LPS lipid A biosynthesis. In terms of biological role, catalyzes the last two sequential reactions in the de novo biosynthetic pathway for UDP-N-acetylglucosamine (UDP-GlcNAc). The C-terminal domain catalyzes the transfer of acetyl group from acetyl coenzyme A to glucosamine-1-phosphate (GlcN-1-P) to produce N-acetylglucosamine-1-phosphate (GlcNAc-1-P), which is converted into UDP-GlcNAc by the transfer of uridine 5-monophosphate (from uridine 5-triphosphate), a reaction catalyzed by the N-terminal domain. This chain is Bifunctional protein GlmU, found in Shewanella frigidimarina (strain NCIMB 400).